The chain runs to 178 residues: Interleukin-10 (178 aa).

The first 18 residues, 1–18 (MPGSALLCCLLLLTGMRI), serve as a signal peptide directing secretion. Asparagine 29 carries an N-linked (GlcNAc...) asparagine glycan. Intrachain disulfides connect cysteine 30/cysteine 126 and cysteine 80/cysteine 132. N-linked (GlcNAc...) asparagine glycosylation is present at asparagine 134.

The protein belongs to the IL-10 family. In terms of assembly, homodimer. Interacts with IL10RA and IL10RB.

The protein resides in the secreted. Its function is as follows. Major immune regulatory cytokine that acts on many cells of the immune system where it has profound anti-inflammatory functions, limiting excessive tissue disruption caused by inflammation. Mechanistically, IL10 binds to its heterotetrameric receptor comprising IL10RA and IL10RB leading to JAK1 and STAT2-mediated phosphorylation of STAT3. In turn, STAT3 translocates to the nucleus where it drives expression of anti-inflammatory mediators. Targets antigen-presenting cells (APCs) such as macrophages and monocytes and inhibits their release of pro-inflammatory cytokines including granulocyte-macrophage colony-stimulating factor /GM-CSF, granulocyte colony-stimulating factor/G-CSF, IL-1 alpha, IL-1 beta, IL-6, IL-8 and TNF-alpha. Also interferes with antigen presentation by reducing the expression of MHC-class II and co-stimulatory molecules, thereby inhibiting their ability to induce T cell activation. In addition, controls the inflammatory response of macrophages by reprogramming essential metabolic pathways including mTOR signaling. This chain is Interleukin-10 (Il10), found in Mus musculus (Mouse).